The following is a 610-amino-acid chain: Dopamine beta-hydroxylase (610 aa).

The Cytoplasmic segment spans residues 1-9 (MQVPSPSVR). The helical; Signal-anchor for type II membrane protein transmembrane segment at 10 to 30 (EAASMYGTAVAVFLVILVAAL) threads the bilayer. Over 31 to 610 (QGSAPAESPF…TVLNISGGKG (580 aa)) the chain is Intragranular. Positions 50–166 (GTLELSWNIS…GTVHLVYGFL (117 aa)) constitute a DOMON domain. 6 disulfide bridges follow: Cys147-Cys589, Cys225-Cys276, Cys262-Cys288, Cys383-Cys496, Cys387-Cys558, and Cys459-Cys481. Residue Asn177 is glycosylated (N-linked (GlcNAc...) asparagine). Residue Tyr223 is part of the active site. The Cu(2+) site is built by His255 and His256. Positions 326, 405, 407, and 480 each coordinate Cu(2+). The active site involves His405. Asn559 carries an N-linked (GlcNAc...) asparagine glycan. Residues 585–610 (PTPHCPASQAQSPAGPTVLNISGGKG) form a disordered region.

This sequence belongs to the copper type II ascorbate-dependent monooxygenase family. In terms of assembly, homotetramer; composed of two disulfide-linked dimers. The cofactor is Cu(2+). Post-translationally, proteolytic cleavage after the membrane-anchor leads to the release of the soluble form. N-glycosylated. In terms of tissue distribution, detected in chromaffin granules in the adrenal medulla (at protein level). Detected in adrenal medulla.

It localises to the cytoplasmic vesicle. The protein resides in the secretory vesicle lumen. Its subcellular location is the secretory vesicle. It is found in the chromaffin granule lumen. The protein localises to the secretory vesicle membrane. It localises to the chromaffin granule membrane. The enzyme catalyses dopamine + 2 L-ascorbate + O2 = (R)-noradrenaline + 2 monodehydro-L-ascorbate radical + H2O. It participates in catecholamine biosynthesis; (R)-noradrenaline biosynthesis; (R)-noradrenaline from dopamine: step 1/1. Catalyzes the hydroxylation of dopamine to noradrenaline (also known as norepinephrine), and is thus vital for regulation of these neurotransmitters. This chain is Dopamine beta-hydroxylase (DBH), found in Bos taurus (Bovine).